The chain runs to 152 residues: MTEPSQKNNSTQQELTNHLFPEKSSQIGQKQLQQIERQLKCLAFQNPGPQVADFNPETRQQKKKARMSKMNEYFSVKYKVMKKYDKSGRLICNDVDLCDCLEKNCLGCFYPCPKCNSNKCGPECRCNRRWVYDAIVTESGEVINTLPFSVPD.

A compositionally biased stretch (polar residues) spans 1-16; the sequence is MTEPSQKNNSTQQELT. Positions 1–27 are disordered; it reads MTEPSQKNNSTQQELTNHLFPEKSSQI.

The chain is ARL14 effector protein-like (Arl14epl) from Mus musculus (Mouse).